Here is a 440-residue protein sequence, read N- to C-terminus: Transposon Ty1-A Gag polyprotein (440 aa).

Composition is skewed to polar residues over residues 1 to 23, 48 to 60, 71 to 93, and 127 to 152; these read MESQ…SVTS, TKAN…TPAS, SPQT…MMTQ, and QSQF…GNTF. Disordered stretches follow at residues 1 to 93, 126 to 173, and 352 to 440; these read MESQ…MMTQ, PQSQ…RPPP, and GSRN…PETY. Residues 153–165 are compositionally biased toward low complexity; that stretch reads TDSSSADSDMTST. The segment at 299–401 is RNA-binding; sequence NNGIHINNKV…NSKSKTARAH (103 aa). Residues 402–418 show a composition bias toward low complexity; the sequence is NVSTSNNSPSTDNDSIS. S416 carries the phosphoserine modification. Positions 419–428 are enriched in polar residues; sequence KSTTEPIQLN. Basic and acidic residues predominate over residues 429 to 440; sequence NKHDLHLRPETY.

As to quaternary structure, homotrimer.

The protein resides in the cytoplasm. Its function is as follows. Capsid protein (CA) is the structural component of the virus-like particle (VLP), forming the shell that encapsulates the retrotransposons dimeric RNA genome. The particles are assembled from trimer-clustered units and there are holes in the capsid shells that allow for the diffusion of macromolecules. CA also has nucleocapsid-like chaperone activity, promoting primer tRNA(i)-Met annealing to the multipartite primer-binding site (PBS), dimerization of Ty1 RNA and initiation of reverse transcription. In Saccharomyces cerevisiae (strain ATCC 204508 / S288c) (Baker's yeast), this protein is Transposon Ty1-A Gag polyprotein (TY1A-A).